A 209-amino-acid chain; its full sequence is Auxin-binding protein ABP19b (209 aa).

The first 18 residues, 1 to 18 (MIFPIFFTFFLLLSTSHA), serve as a signal peptide directing secretion. An intrachain disulfide couples C24 to C39. The 147-residue stretch at 53–199 (SGLGIAGNTT…TTLLDAPQIK (147 aa)) folds into the Cupin type-1 domain. N-linked (GlcNAc...) asparagine glycosylation occurs at N60. Residues H101, H103, E108, and H147 each coordinate Mn(2+).

This sequence belongs to the germin family. In terms of assembly, interacts with ABP20.

Its subcellular location is the secreted. The protein localises to the extracellular space. The protein resides in the apoplast. It is found in the cell wall. Probable receptor for the plant growth-promoting hormone auxin. This chain is Auxin-binding protein ABP19b (ABP19B), found in Prunus persica (Peach).